A 313-amino-acid chain; its full sequence is Dihydroorotate dehydrogenase B (NAD(+)), catalytic subunit (313 aa).

Residues S21 and 45-46 (KA) contribute to the FMN site. Residues K45 and 69 to 73 (NAIGL) each bind substrate. FMN-binding residues include N99 and N127. N127 contributes to the substrate binding site. Residue C130 is the Nucleophile of the active site. FMN-binding residues include K165 and I191. 192–193 (NT) provides a ligand contact to substrate. FMN-binding positions include G217, 243 to 244 (GG), and 265 to 266 (GT).

The protein belongs to the dihydroorotate dehydrogenase family. Type 1 subfamily. Heterotetramer of 2 PyrK and 2 PyrD type B subunits. FMN serves as cofactor.

The protein resides in the cytoplasm. It catalyses the reaction (S)-dihydroorotate + NAD(+) = orotate + NADH + H(+). The protein operates within pyrimidine metabolism; UMP biosynthesis via de novo pathway; orotate from (S)-dihydroorotate (NAD(+) route): step 1/1. Its function is as follows. Catalyzes the conversion of dihydroorotate to orotate with NAD(+) as electron acceptor. The polypeptide is Dihydroorotate dehydrogenase B (NAD(+)), catalytic subunit (pyrD) (Geobacillus kaustophilus (strain HTA426)).